A 212-amino-acid polypeptide reads, in one-letter code: Imidazole glycerol phosphate synthase subunit HisH (212 aa).

Residues 3-212 (TVAVIDYGMG…QNFIAWDGRW (210 aa)) enclose the Glutamine amidotransferase type-1 domain. The active-site Nucleophile is the C81. Catalysis depends on residues H190 and E192.

In terms of assembly, heterodimer of HisH and HisF.

The protein resides in the cytoplasm. It catalyses the reaction 5-[(5-phospho-1-deoxy-D-ribulos-1-ylimino)methylamino]-1-(5-phospho-beta-D-ribosyl)imidazole-4-carboxamide + L-glutamine = D-erythro-1-(imidazol-4-yl)glycerol 3-phosphate + 5-amino-1-(5-phospho-beta-D-ribosyl)imidazole-4-carboxamide + L-glutamate + H(+). The catalysed reaction is L-glutamine + H2O = L-glutamate + NH4(+). Its pathway is amino-acid biosynthesis; L-histidine biosynthesis; L-histidine from 5-phospho-alpha-D-ribose 1-diphosphate: step 5/9. IGPS catalyzes the conversion of PRFAR and glutamine to IGP, AICAR and glutamate. The HisH subunit catalyzes the hydrolysis of glutamine to glutamate and ammonia as part of the synthesis of IGP and AICAR. The resulting ammonia molecule is channeled to the active site of HisF. In Pseudomonas putida (strain ATCC 47054 / DSM 6125 / CFBP 8728 / NCIMB 11950 / KT2440), this protein is Imidazole glycerol phosphate synthase subunit HisH.